The chain runs to 85 residues: Alpha-toxin Ac2 (85 aa).

Residues 1–19 (MNYLVMISLALLFMTGVES) form the signal peptide. Positions 21–83 (KDGYIVDDRN…VRTKGPGRCK (63 aa)) constitute an LCN-type CS-alpha/beta domain. 4 cysteine pairs are disulfide-bonded: cysteine 31–cysteine 82, cysteine 35–cysteine 55, cysteine 41–cysteine 65, and cysteine 45–cysteine 67. Position 83 is a lysine amide (lysine 83).

Belongs to the long (4 C-C) scorpion toxin superfamily. Sodium channel inhibitor family. Alpha subfamily. In terms of tissue distribution, expressed by the venom gland.

Its subcellular location is the secreted. Functionally, alpha toxins bind voltage-independently at site-3 of sodium channels (Nav) and inhibit the inactivation of the activated channels, thereby blocking neuronal transmission. This is Alpha-toxin Ac2 from Androctonus crassicauda (Arabian fat-tailed scorpion).